Reading from the N-terminus, the 32-residue chain is ilv operon leader peptide (32 aa).

The protein is ilv operon leader peptide (ilvL) of Escherichia coli O157:H7.